We begin with the raw amino-acid sequence, 375 residues long: MFISEIQLKNYRNYEKLELSFEDKVNVIIGENAQGKTNLMEAIYVLAMAKSHRTSNDRELIRWDEDFGQIKGKLQKRNSSLSLELNISKKGKKAKLNQLEQQKLSQYIGVMNVVMFAPEDLNLVKGSPQVRRRFLDMELGQIAPVYLYELSQYQKVLTQRNHLLKKMQGNSKNEETMLDVFTLQLIEHGTKILQKRFEFLHLLQEWAAPIHRGISRGLEELEIVYKPSVDVSESMDLSKIKEVYYESFQSVKQREIFRGTTLIGPHRDDLQFFVNSKNVQVFGSQGQQRTTALSLKLAEIELIYSEVKEYPILLLDDVLSELDDYRQSHLLNTIQGKVQTFVTTTSVDGIEHETLKEAKTIHVTNGTVDCEIDRA.

Residue 30 to 37 (GENAQGKT) participates in ATP binding.

It belongs to the RecF family.

Its subcellular location is the cytoplasm. Its function is as follows. The RecF protein is involved in DNA metabolism; it is required for DNA replication and normal SOS inducibility. RecF binds preferentially to single-stranded, linear DNA. It also seems to bind ATP. This chain is DNA replication and repair protein RecF, found in Bacillus thuringiensis (strain Al Hakam).